The following is a 442-amino-acid chain: tRNA modification GTPase MnmE (442 aa).

Residues R27, E84, and K124 each contribute to the (6S)-5-formyl-5,6,7,8-tetrahydrofolate site. The TrmE-type G domain occupies 221 to 366; it reads GLHVVIVGAP…LLDALQAFAE (146 aa). Residues 231-236, 250-256, and 275-278 contribute to the GTP site; these read NAGKSS, SKEAGTT, and DTAG. Positions 235 and 256 each coordinate Mg(2+). (6S)-5-formyl-5,6,7,8-tetrahydrofolate is bound at residue K442.

This sequence belongs to the TRAFAC class TrmE-Era-EngA-EngB-Septin-like GTPase superfamily. TrmE GTPase family. As to quaternary structure, homodimer. Heterotetramer of two MnmE and two MnmG subunits. Requires K(+) as cofactor.

The protein localises to the cytoplasm. Exhibits a very high intrinsic GTPase hydrolysis rate. Involved in the addition of a carboxymethylaminomethyl (cmnm) group at the wobble position (U34) of certain tRNAs, forming tRNA-cmnm(5)s(2)U34. The sequence is that of tRNA modification GTPase MnmE from Brucella suis biovar 1 (strain 1330).